A 191-amino-acid chain; its full sequence is Cell division protein SepF (191 aa).

The span at Tyr157 to Pro178 shows a compositional bias: polar residues. A disordered region spans residues Tyr157–Gln191.

It belongs to the SepF family. In terms of assembly, homodimer. Interacts with FtsZ.

Its subcellular location is the cytoplasm. Functionally, cell division protein that is part of the divisome complex and is recruited early to the Z-ring. Probably stimulates Z-ring formation, perhaps through the cross-linking of FtsZ protofilaments. Its function overlaps with FtsA. This is Cell division protein SepF from Synechococcus elongatus (strain ATCC 33912 / PCC 7942 / FACHB-805) (Anacystis nidulans R2).